The chain runs to 299 residues: 4-diphosphocytidyl-2-C-methyl-D-erythritol kinase (299 aa).

The active site involves lysine 17. 99–109 (PLASGLGGGSS) contributes to the ATP binding site. Residue aspartate 142 is part of the active site.

The protein belongs to the GHMP kinase family. IspE subfamily.

It catalyses the reaction 4-CDP-2-C-methyl-D-erythritol + ATP = 4-CDP-2-C-methyl-D-erythritol 2-phosphate + ADP + H(+). Its pathway is isoprenoid biosynthesis; isopentenyl diphosphate biosynthesis via DXP pathway; isopentenyl diphosphate from 1-deoxy-D-xylulose 5-phosphate: step 3/6. In terms of biological role, catalyzes the phosphorylation of the position 2 hydroxy group of 4-diphosphocytidyl-2C-methyl-D-erythritol. This is 4-diphosphocytidyl-2-C-methyl-D-erythritol kinase from Deinococcus radiodurans (strain ATCC 13939 / DSM 20539 / JCM 16871 / CCUG 27074 / LMG 4051 / NBRC 15346 / NCIMB 9279 / VKM B-1422 / R1).